Reading from the N-terminus, the 394-residue chain is Endothelial cell-selective adhesion molecule (394 aa).

The first 29 residues, 1-29, serve as a signal peptide directing secretion; sequence MILQAGTPETSLLRVLFLGLSTLAAFSRA. Residues 30–251 lie on the Extracellular side of the membrane; that stretch reads QMELHVPPGL…LDVMTGSKAA (222 aa). The region spanning 37-146 is the Ig-like V-type domain; it reads PGLNKLEAVE…EGKSIGHSIK (110 aa). 4 N-linked (GlcNAc...) asparagine glycosylation sites follow: asparagine 111, asparagine 172, asparagine 216, and asparagine 239. In terms of domain architecture, Ig-like C2-type spans 159 to 243; it reads PSCSLQGVPY…GFAKCNVTLD (85 aa). A disulfide bond links cysteine 177 and cysteine 227. A helical transmembrane segment spans residues 252–272; that stretch reads VVAGAVVGTFVGLVLIAGLVL. The Cytoplasmic portion of the chain corresponds to 273–394; the sequence is LYQRRSKTLE…PAQSQAGSLV (122 aa). Position 304 is a phosphoserine (serine 304). Polar residues-rich tracts occupy residues 304–318 and 335–347; these read SDTI…SVTS and FTPT…QALS. A disordered region spans residues 304 to 372; it reads SDTISKNGTL…SLTPGGVSSS (69 aa). 2 positions are modified to phosphothreonine: threonine 336 and threonine 338. Phosphoserine occurs at positions 340, 343, 348, and 375.

Interacts with MAGI1. Highly expressed in the heart and lung. Weakly expressed in the kidney and skin. Expression is restricted to the vascular endothelial cells. Expressed in the kidney, heart and tongue (at protein level). Also expressed on megakaryocytes and activated platelets.

The protein localises to the cell junction. It is found in the adherens junction. The protein resides in the tight junction. Its subcellular location is the cell membrane. Can mediate aggregation most likely through a homophilic molecular interaction. This is Endothelial cell-selective adhesion molecule (Esam) from Mus musculus (Mouse).